Consider the following 457-residue polypeptide: Acetylcholine receptor subunit alpha (457 aa).

The N-terminal stretch at 1–20 (MELTAVLLLLGLCSAGTVLG) is a signal peptide. Topologically, residues 21-230 (SEHETRLVAK…ITYHFVMQRL (210 aa)) are extracellular. 2 cysteine pairs are disulfide-bonded: Cys-148/Cys-162 and Cys-212/Cys-213. Asn-161 carries N-linked (GlcNAc...) asparagine glycosylation. The next 3 membrane-spanning stretches (helical) occupy residues 231–255 (PLYFIVNVIIPCLLFSFLTSLVFYL), 263–281 (MTLSISVLLSLTVFLLVIV), and 297–316 (YMLFTMVFVIASIIITVIVI). Over 317–428 (NTHHRSPSTH…WKYVAMVMDH (112 aa)) the chain is Cytoplasmic. Residues 429-447 (ILLGVFMLVCLIGTLAVFA) traverse the membrane as a helical segment.

Belongs to the ligand-gated ion channel (TC 1.A.9) family. Acetylcholine receptor (TC 1.A.9.1) subfamily. Alpha-1/CHRNA1 sub-subfamily. As to quaternary structure, one of the alpha chains that assemble within the acetylcholine receptor, a pentamer of two alpha chains, a beta, a delta, and a gamma (in immature muscle) or epsilon (in mature muscle) chains. The muscle heteropentamer composed of alpha-1, beta-1, delta, epsilon subunits interacts with the alpha-conotoxin ImII.

It is found in the postsynaptic cell membrane. The protein resides in the cell membrane. It catalyses the reaction K(+)(in) = K(+)(out). The catalysed reaction is Na(+)(in) = Na(+)(out). Its function is as follows. Upon acetylcholine binding, the AChR responds by an extensive change in conformation that affects all subunits and leads to opening of an ion-conducting channel across the plasma membrane. The chain is Acetylcholine receptor subunit alpha (Chrna1) from Rattus norvegicus (Rat).